Reading from the N-terminus, the 394-residue chain is Phosphoglycerate kinase (394 aa).

Residues 21–23 (DFN), Arg-36, 59–62 (HLGR), Arg-118, and Arg-151 each bind substrate. Position 183 is a phosphoserine (Ser-183). The ATP site is built by Lys-201 and Gly-292. Position 299 is a phosphothreonine (Thr-299). Residues Glu-323 and 350–353 (GGDS) each bind ATP.

This sequence belongs to the phosphoglycerate kinase family. Monomer.

It is found in the cytoplasm. The enzyme catalyses (2R)-3-phosphoglycerate + ATP = (2R)-3-phospho-glyceroyl phosphate + ADP. Its pathway is carbohydrate degradation; glycolysis; pyruvate from D-glyceraldehyde 3-phosphate: step 2/5. The sequence is that of Phosphoglycerate kinase (pgk) from Priestia megaterium (strain DSM 319 / IMG 1521) (Bacillus megaterium).